The sequence spans 156 residues: Small ribosomal subunit protein uS7 (156 aa).

It belongs to the universal ribosomal protein uS7 family. As to quaternary structure, part of the 30S ribosomal subunit. Contacts proteins S9 and S11.

In terms of biological role, one of the primary rRNA binding proteins, it binds directly to 16S rRNA where it nucleates assembly of the head domain of the 30S subunit. Is located at the subunit interface close to the decoding center, probably blocks exit of the E-site tRNA. The chain is Small ribosomal subunit protein uS7 from Desulfitobacterium hafniense (strain Y51).